Reading from the N-terminus, the 210-residue chain is Synaptosomal-associated protein 23 (210 aa).

Met1 carries the N-acetylmethionine modification. 4 positions are modified to phosphoserine: Ser5, Ser20, Ser23, and Ser34. The t-SNARE coiled-coil homology 1 domain occupies 14 to 76; the sequence is HQVTDESLES…REAEKTLTEL (63 aa). Residues 23–76 are a coiled coil; sequence STRRILGLAIESQDAGIKTITMLDEQGEQLNRIEEGMDQINKDMREAEKTLTEL. Residues Cys79, Cys80, Cys83, Cys85, and Cys87 are each lipidated (S-palmitoyl cysteine). The segment at 104–135 is disordered; that stretch reads GDGGDNSPSNVVSKQPSRITNGQPQQTTGAAS. Polar residues predominate over residues 109–133; the sequence is NSPSNVVSKQPSRITNGQPQQTTGA. Phosphoserine occurs at positions 110 and 160. The t-SNARE coiled-coil homology 2 domain occupies 145–207; the sequence is DAREDEMEEN…DIANTRAKKL (63 aa).

Belongs to the SNAP-25 family. In terms of assembly, homotetramer (via coiled-coil domain), also forms heterotetramers with STX4 and VAMP3. Found in a complex with VAMP8 and STX1A. Found in a complex with VAMP8 and STX4 in pancreas. Interacts simultaneously with SNAPIN and SYN4. Interacts with STX1A. Interacts with STX12. Interacts tightly to multiple syntaxins and synaptobrevins/VAMPs. Interacts with ZDHHC13 (via ANK repeats). Interacts with ZDHHC17 (via ANK repeats). (Microbial infection) Targeted and hydrolyzed by C.botulinum neurotoxin type A (BoNT/A, botA) which hydrolyzes the 202-Thr-|-Arg-203 bond; the in vitro reaction is not highly efficient. Post-translationally, (Microbial infection) Targeted and hydrolyzed by C.botulinum neurotoxin type E (BoNT/E) which hydrolyzes the 185-Arg-|-Ile-186 bond; the in vitro reaction is more efficient than that of BoNT/A. Expressed in non-neuronal tissues.

The protein resides in the cell membrane. Its subcellular location is the synapse. It is found in the synaptosome. Essential component of the high affinity receptor for the general membrane fusion machinery and an important regulator of transport vesicle docking and fusion. The chain is Synaptosomal-associated protein 23 (Snap23) from Mus musculus (Mouse).